We begin with the raw amino-acid sequence, 490 residues long: Ribosomal L1 domain-containing protein 1 (490 aa).

Met1 bears the N-acetylmethionine mark. Low complexity predominate over residues 1 to 27; it reads MEDSASASLSSAAATGTSTSTPAAPTA. The tract at residues 1–33 is disordered; that stretch reads MEDSASASLSSAAATGTSTSTPAAPTARKQLDK. Glycyl lysine isopeptide (Lys-Gly) (interchain with G-Cter in SUMO2) cross-links involve residues Lys120 and Lys254. Residues 280-293 are compositionally biased toward basic residues; it reads LNKKKKEARRKRRE. Positions 280–313 form a coiled coil; it reads LNKKKKEARRKRRERNFEKQKERKKKRQQARKTA. The disordered stretch occupies residues 280–490; that stretch reads LNKKKKEARR…PKKPKVPQST (211 aa). Residues 329-343 show a composition bias toward basic and acidic residues; the sequence is TVKKPESKKEQTPEH. The residue at position 340 (Thr340) is a Phosphothreonine. The segment covering 344–353 has biased composition (basic residues); the sequence is GKKKRGRGKA. Thr358 is subject to Phosphothreonine. Ser361 carries the post-translational modification Phosphoserine. A Phosphothreonine modification is found at Thr375. Positions 376-385 are enriched in basic and acidic residues; sequence PANEKVEIQK. A Glycyl lysine isopeptide (Lys-Gly) (interchain with G-Cter in SUMO2) cross-link involves residue Lys380. Ser392 and Ser396 each carry phosphoserine. A phosphothreonine mark is found at Thr415 and Thr423. A Phosphoserine modification is found at Ser427. Residues 427-460 are compositionally biased toward basic and acidic residues; sequence SPEKKPKIKEEAVKEKSPSLGKKDARQTPKKPEA. Lys435 participates in a covalent cross-link: Glycyl lysine isopeptide (Lys-Gly) (interchain with G-Cter in SUMO2). The residue at position 443 (Ser443) is a Phosphoserine. Lys461 participates in a covalent cross-link: Glycyl lysine isopeptide (Lys-Gly) (interchain with G-Cter in SUMO2). Thr465 carries the post-translational modification Phosphothreonine. At Lys468 the chain carries N6-acetyllysine. Phosphoserine is present on Ser469. A compositionally biased stretch (basic residues) spans 469–490; that stretch reads SVRKASHTPKKWPKKPKVPQST.

Belongs to the universal ribosomal protein uL1 family. Highly divergent. In terms of assembly, interacts with ING1 (isoform 2). Interacts with KPNA7 and KPNA2. Expressed at high intensities in the heart, skeletal muscle, and placenta.

It is found in the nucleus. The protein localises to the nucleolus. In terms of biological role, regulates cellular senescence through inhibition of PTEN translation. Acts as a pro-apoptotic regulator in response to DNA damage. The sequence is that of Ribosomal L1 domain-containing protein 1 (RSL1D1) from Homo sapiens (Human).